The sequence spans 538 residues: DALR anticodon-binding domain-containing protein 3 (538 aa).

As to quaternary structure, part of a complex containing tRNA(Arg) and METTL2. Interacts with tRNA(Arg)(CCU) and tRNA(Arg)(UCU). Interacts with METTL2.

Functionally, involved in tRNA methylation. Facilitates the recognition and targeting of tRNA(Arg)(CCU) and tRNA(Arg)(UCU) substrates for N(3)-methylcytidine modification by METTL2. The polypeptide is DALR anticodon-binding domain-containing protein 3 (Dalrd3) (Mus musculus (Mouse)).